The chain runs to 722 residues: MDFISENTISDKTTLEELKNATLFQVTKVDDRDCLRARRICNAPKGHWAGLMEKAKAMGDPTEEEKDELKKIVESYNTVSVLGVSKSEGATGPRLVSSLKGLKNLLPGVNPKTLQETLLVGAPCPSTEPTTEEYWNVCRAAVGASMGSAKINMSQKVVMGASVIGWGQLNQSGPGVYFLNTKEIVTAEGKVDETRGPLERTSAPLMRDISRLIQETIEEVETGGDPSFSVRSEGGSKIEGRIAFSLHSEVSTLKMRIALEQKLAKYEYMGENLLTLVKNTSIDRMQPDSAMMGKMVLESLRTHTVSSEQLNGRMITVQSQGLETIAISSPFDVEYDDGYVFTRMKGNFVAVGRDYKGAILCFREGQGTFFSGRGNWSGLMEKCLVEMRLCPCFYSCTWQDYPDKKSLYEKATFEAKQIVFAMGENTGVDIRVNTDGEIGDKGISLLTREREDKYMSKVSYECRVVSGKLVMGLDKMSRVAKGNLEVVREKGDDTSQSDSFYEGVLQVGSMIGTTMESLKQQLQGPVGIWRASGVSAMERCMKRGQSKTVVASARYTFQKMMEKMATGREVSKYSLIIVMRCCIGFTSEANKRALTNISGTGYYISVAQPTVVKLAGEWLITPVGRSKTGEVQYVSAKLKKGMTTGKLELIKKADRSDLDNFPEPSADELLREGTIVLMQIGKDKWLCRVRTGDRRVRTDTDIQRAEAKSQVEKEDLMDEYGV.

In terms of assembly, the RNA polymerase is composed of three subunits: PB1, PB2 and PA.

It is found in the virion. Its subcellular location is the host nucleus. In terms of biological role, involved in transcription initiation and cap-stealing mechanism, in which cellular capped pre-mRNA are used to generate primers for viral transcription. Binds the cap of the target pre-RNA which is subsequently cleaved by PB1. May play a role in genome replication. The protein is Polymerase basic protein 2 of Gadus morhua (Atlantic cod).